We begin with the raw amino-acid sequence, 521 residues long: Formate--tetrahydrofolate ligase (521 aa).

The protein belongs to the formate--tetrahydrofolate ligase family.

The enzyme catalyses (6S)-5,6,7,8-tetrahydrofolate + formate + ATP = (6R)-10-formyltetrahydrofolate + ADP + phosphate. The protein operates within one-carbon metabolism; tetrahydrofolate interconversion. The protein is Formate--tetrahydrofolate ligase of Ureaplasma parvum serovar 3 (strain ATCC 700970).